A 550-amino-acid polypeptide reads, in one-letter code: Methionine--tRNA ligase (550 aa).

Residues 13–23 carry the 'HIGH' region motif; the sequence is PYANGPLHFGH. Positions 145, 148, 158, and 161 each coordinate Zn(2+). Positions 331 to 335 match the 'KMSKS' region motif; it reads QFSKS. Lys334 is a binding site for ATP.

Belongs to the class-I aminoacyl-tRNA synthetase family. MetG type 1 subfamily. In terms of assembly, monomer. It depends on Zn(2+) as a cofactor.

It localises to the cytoplasm. It catalyses the reaction tRNA(Met) + L-methionine + ATP = L-methionyl-tRNA(Met) + AMP + diphosphate. In terms of biological role, is required not only for elongation of protein synthesis but also for the initiation of all mRNA translation through initiator tRNA(fMet) aminoacylation. The protein is Methionine--tRNA ligase of Chlamydia trachomatis serovar L2b (strain UCH-1/proctitis).